A 636-amino-acid polypeptide reads, in one-letter code: Chaperone protein DnaK (636 aa).

A disordered region spans residues 579–636 (ELYKNAAPPPGADGQQGADGQQGADGQQGADGQQGADGQQGADGQTTESSSNDETKTN). The span at 590-623 (ADGQQGADGQQGADGQQGADGQQGADGQQGADGQ) shows a compositional bias: low complexity.

This sequence belongs to the heat shock protein 70 family.

Its function is as follows. Acts as a chaperone. In Nitrosopumilus maritimus (strain SCM1), this protein is Chaperone protein DnaK.